We begin with the raw amino-acid sequence, 414 residues long: Seminal vesicle secretory protein 2 (414 aa).

A signal peptide spans 1–22 (MKSSVFILSLFLLLERQAAVVG). At glutamine 23 the chain carries Pyrrolidone carboxylic acid. Tandem repeats lie at residues 108-120 (ESQI…VKSS), 127-139 (GSQL…VKSS), 140-152 (ESQL…VKAS), 153-165 (GSQL…VKAS), 166-178 (GSQL…MKSS), 179-191 (GSQV…MKSS), 192-204 (GSQV…MKAS), 205-217 (ESQI…RKSQ), 224-236 (YGQM…TKSL), 237-249 (ESQA…VKSQ), 257-269 (YGQR…ETQL), 275-287 (DAQL…QKSQ), and 299-311 (SAQL…QKSL). The 13 X 13 AA tandem repeats stretch occupies residues 108 to 311 (ESQIKSFRQV…LKSFGQQKSL (204 aa)). 3 disordered regions span residues 170 to 228 (KSYG…GQMK), 240 to 294 (AKSF…SFSQ), and 306 to 369 (GQQK…FGQE). Residues 240 to 259 (AKSFGQVKSQSGQMKSSYGQ) show a composition bias toward polar residues. Residues 277–294 (QLKSYGQQKSQKQSSFSQ) are compositionally biased toward low complexity. Composition is skewed to polar residues over residues 306–321 (GQQK…TQQK) and 342–351 (SVQQKSTQQM). Positions 358–369 (SQFGQQRQFGQE) are enriched in low complexity.

The repeating unit appears to be involved in the formation of the copulatory plug via a transglutaminase reaction cross-linking glutamine and lysine residues.

The rat seminal vesicle contains six major androgen-dependent secretory proteins referred to as SVS I-VI. The SVS I-III proteins appear to be components of the rat copulatory plug, with the SVS II protein being the major component. In Rattus norvegicus (Rat), this protein is Seminal vesicle secretory protein 2 (Svs2).